Reading from the N-terminus, the 354-residue chain is MKKEGGGSIITLAACILGLYASFLTWSVLQERISTKPYGSNPDTGSPDFFKAPLVINIIQAFFASIVGLIYSVVSSRSNPLSIFTQNEKPVALKFFKSFVIISLTSSLSSPLGYESLKHVDYLAYLLAKSCKLIPVMLVHFVLYRTKFPLYKCMVAGSVTVGVIIFTLSHSSTKSKADISDGKTALGMAQLIGSMLLDGLTNSTQDQLFKLRGTSPSNKHTKLTGAYLMCILNAFIFINTLAYALIFKYQSEITYTVNFVHHYPQVMMNILEFAILGSVGQVFVFIILEKFDSLILITSTVTRKMISMILSVVLFGHQLNGLQWGGVGLVFGGIGYEALVKMSMNKAPTTKKNQ.

The next 5 membrane-spanning stretches (helical) occupy residues 6–26 (GGSI…FLTW), 54–74 (LVIN…YSVV), 95–112 (FFKS…SSPL), 123–143 (LAYL…HFVL), and 148–168 (FPLY…IFTL). N-linked (GlcNAc...) asparagine glycosylation is present at N202. The next 4 helical transmembrane spans lie at 227–247 (YLMC…ALIF), 268–288 (MNIL…FIIL), 295–317 (ILIT…LFGH), and 321–340 (GLQW…EALV).

The protein belongs to the nucleotide-sugar transporter family. SLC35B subfamily.

It is found in the endoplasmic reticulum membrane. Functionally, may be involved in specific transport of UDP-Gal from the cytosol to the Golgi lumen. Involved in the maintenance of optimal conditions for the folding of secretory pathway proteins in the endoplasmic reticulum. This chain is UDP-galactose transporter homolog 1 (HUT1), found in Debaryomyces hansenii (strain ATCC 36239 / CBS 767 / BCRC 21394 / JCM 1990 / NBRC 0083 / IGC 2968) (Yeast).